The following is a 278-amino-acid chain: Membrane protein insertase YidC 2 (278 aa).

A signal peptide spans 1-18; that stretch reads MHKRLFITLLGFIILLAG. C19 carries the N-palmitoyl cysteine lipid modification. Residue C19 is the site of S-diacylglycerol cysteine attachment. The next 4 membrane-spanning stretches (helical) occupy residues 55–75, 132–152, 176–196, and 224–244; these read GFAIISIVLIVRFILLPFMLI, MLGCLPVLIQMPILMGLYMSL, LIMTIIAAIMYFVQPLVNSIH, and AAALGLYWSISAAFLIVQMHF.

This sequence belongs to the OXA1/ALB3/YidC family. Type 2 subfamily.

The protein localises to the cell membrane. Functionally, required for the insertion and/or proper folding and/or complex formation of integral membrane proteins into the membrane. Involved in integration of membrane proteins that insert both dependently and independently of the Sec translocase complex, as well as at least some lipoproteins. This is Membrane protein insertase YidC 2 from Staphylococcus epidermidis (strain ATCC 12228 / FDA PCI 1200).